We begin with the raw amino-acid sequence, 234 residues long: Transcription factor ILR3 (234 aa).

Positions 34–85 (QPIGVSSNSSAGVDGSAGNSEASKEPGSKKRGRCESSSATSSKACREKQRRD) are disordered. Residues 36–54 (IGVSSNSSAGVDGSAGNSE) are compositionally biased toward polar residues. The bHLH domain maps to 71-122 (SATSSKACREKQRRDRLNDKFMELGAILEPGNPPKTDKAAILVDAVRMVTQL).

Homodimer. Interacts with BTS and BHLH47/PYE. As to expression, widely expressed throughout development, mostly in vasculatures.

It localises to the nucleus. Its function is as follows. Transcription factor. Plays a role in resistance to amide-linked indole-3-acetic acid (IAA) conjugates such as IAA-Leu and IAA-Phe. May regulate gene expression in response to metal homeostasis changes. The polypeptide is Transcription factor ILR3 (ILR3) (Arabidopsis thaliana (Mouse-ear cress)).